The chain runs to 259 residues: TCF3 fusion partner homolog (259 aa).

Disordered regions lie at residues 50–72 and 141–210; these read GGLG…GRRR and EDDG…APVQ. Ser-167 is modified (phosphoserine). Positions 167 to 178 are enriched in polar residues; the sequence is SPSQRTTATLDP. Thr-172 bears the Phosphothreonine mark. Residues Ser-180 and Ser-188 each carry the phosphoserine modification. Thr-203 is modified (phosphothreonine). A Glycyl lysine isopeptide (Lys-Gly) (interchain with G-Cter in SUMO2) cross-link involves residue Lys-222. At Ser-255 the chain carries Phosphoserine.

Interacts with NOL3; translocates NOL3 into the nucleus and negatively regulated TFPT-induced cell death. Component of the chromatin remodeling INO80 complex; specifically part of a complex module associated with the N-terminus of INO80.

Its subcellular location is the nucleus. In terms of biological role, appears to promote apoptosis in a p53/TP53-independent manner. Functionally, putative regulatory component of the chromatin remodeling INO80 complex which is involved in transcriptional regulation, DNA replication and probably DNA repair. This chain is TCF3 fusion partner homolog (Tfpt), found in Mus musculus (Mouse).